The chain runs to 337 residues: MISLKSIVDKLYNLEDLSYQESYQLFDYFIKGQIELPLQTSILIALKLKKETSIEIAAAVEALFDNTKEFPKIKGDLAGIVGTGGDGFNTINISTTAAIVAATAGYKVAKHGGRSVSSKSGSFDLLESFGVNIELAPDQTKQCLELYNLGFLFAPFYSDGFRHIKEARTILKTRTIFNILGPLINPARPNKVVIGVYSKDLILPMAKTLVNLGIDRAVVVYGSGLDEVAIHDDTYVAEIQNNQIIEYKVSPVDFGIYTYAIKDLEGGLPEQNREIIKQILLGKGKEAHNAAVAVNVAMLMRLYDKDDLKQNTQEVLEIIKSGKCFNTLQQVINYSNK.

5-phospho-alpha-D-ribose 1-diphosphate-binding positions include Gly82, 85–86 (GD), Thr90, 92–95 (NIST), 110–118 (KHGGRSVSS), and Ser122. Residue Gly82 participates in anthranilate binding. Ser94 contributes to the Mg(2+) binding site. An anthranilate-binding site is contributed by Arg168. Mg(2+)-binding residues include Asp226 and Glu227.

This sequence belongs to the anthranilate phosphoribosyltransferase family. As to quaternary structure, homodimer. The cofactor is Mg(2+).

It carries out the reaction N-(5-phospho-beta-D-ribosyl)anthranilate + diphosphate = 5-phospho-alpha-D-ribose 1-diphosphate + anthranilate. It participates in amino-acid biosynthesis; L-tryptophan biosynthesis; L-tryptophan from chorismate: step 2/5. Functionally, catalyzes the transfer of the phosphoribosyl group of 5-phosphorylribose-1-pyrophosphate (PRPP) to anthranilate to yield N-(5'-phosphoribosyl)-anthranilate (PRA). The protein is Anthranilate phosphoribosyltransferase of Francisella tularensis subsp. holarctica (strain OSU18).